A 204-amino-acid chain; its full sequence is Phosphoribosyl-dephospho-CoA transferase (204 aa).

Active-site residues include Asp129 and Asp131.

This sequence belongs to the MdcG family.

It carries out the reaction apo-[malonate decarboxylase ACP] + 2'-(5''-triphospho-alpha-D-ribosyl)-3'-dephospho-CoA = holo-[malonate decarboxylase ACP] + diphosphate. In terms of biological role, transfers 2'-(5-triphosphoribosyl)-3'-dephosphocoenzyme-A to the apo-[acyl-carrier-protein] of the malonate decarboxylase to yield holo-[acyl-carrier-protein]. The protein is Phosphoribosyl-dephospho-CoA transferase of Pseudomonas putida (Arthrobacter siderocapsulatus).